The following is a 902-amino-acid chain: Protein translocase subunit SecA (902 aa).

ATP-binding positions include Gln87, 105-109, and Asp512; that span reads GEGKT. A disordered region spans residues 850-902; sequence RLAKQQQLSHEVTKESQMSAVDGQVASGKKVGRNEPCPCGSGKKYKHCHGKLG. The span at 853-868 shows a compositional bias: polar residues; it reads KQQQLSHEVTKESQMS. The Zn(2+) site is built by Cys886, Cys888, Cys897, and His898. Residues 892-902 show a composition bias toward basic residues; sequence KKYKHCHGKLG.

The protein belongs to the SecA family. Monomer and homodimer. Part of the essential Sec protein translocation apparatus which comprises SecA, SecYEG and auxiliary proteins SecDF-YajC and YidC. The cofactor is Zn(2+).

The protein resides in the cell inner membrane. The protein localises to the cytoplasm. It carries out the reaction ATP + H2O + cellular proteinSide 1 = ADP + phosphate + cellular proteinSide 2.. Functionally, part of the Sec protein translocase complex. Interacts with the SecYEG preprotein conducting channel. Has a central role in coupling the hydrolysis of ATP to the transfer of proteins into and across the cell membrane, serving both as a receptor for the preprotein-SecB complex and as an ATP-driven molecular motor driving the stepwise translocation of polypeptide chains across the membrane. The chain is Protein translocase subunit SecA from Proteus mirabilis (strain HI4320).